The primary structure comprises 505 residues: Histidine ammonia-lyase (505 aa).

A cross-link (5-imidazolinone (Ala-Gly)) is located at residues 141–143; sequence ASG. Ser-142 is subject to 2,3-didehydroalanine (Ser).

The protein belongs to the PAL/histidase family. In terms of processing, contains an active site 4-methylidene-imidazol-5-one (MIO), which is formed autocatalytically by cyclization and dehydration of residues Ala-Ser-Gly.

It localises to the cytoplasm. It catalyses the reaction L-histidine = trans-urocanate + NH4(+). The protein operates within amino-acid degradation; L-histidine degradation into L-glutamate; N-formimidoyl-L-glutamate from L-histidine: step 1/3. The polypeptide is Histidine ammonia-lyase (Bacillus anthracis).